The following is a 313-amino-acid chain: Olfactory receptor 8B3 (313 aa).

Topologically, residues 1-25 (MLARNNSLVTEFILAGLTDHPEFQQ) are extracellular. Residue N5 is glycosylated (N-linked (GlcNAc...) asparagine). A helical membrane pass occupies residues 26 to 46 (PLFFLFLVVYIVTMVGNLGLI). Residues 47–54 (ILFGLNSH) lie on the Cytoplasmic side of the membrane. A helical membrane pass occupies residues 55–75 (LHTPMYYFLFNLSFIDLCYSS). The Extracellular portion of the chain corresponds to 76–99 (VFTPKMLMNFVSKKNIISYVGCMT). The cysteines at positions 97 and 189 are disulfide-linked. The helical transmembrane segment at 100–120 (QLFFFLFFVISECYMLTSMAY) threads the bilayer. Residues 121–139 (DRYVAICNPLLYKVTMSHQ) are Cytoplasmic-facing. The chain crosses the membrane as a helical span at residues 140–160 (VCSMLTFAAYIMGLAGATAHT). The Extracellular portion of the chain corresponds to 161-197 (GCMLRLTFCSANIINHYLCDILPLLQLSCTSTYVNEV). Residues 198–217 (VVLIVVGINIMVPSCTILIS) form a helical membrane-spanning segment. Over 218 to 237 (YVFIVTSILHIKSTQGRSKA) the chain is Cytoplasmic. Residues 238-258 (FSTCSSHVIALSLFFGSAAFM) traverse the membrane as a helical segment. Residues 259 to 270 (YIKYSSGSMEQG) lie on the Extracellular side of the membrane. Residues 271–291 (KVSSVFYTNVVPMLNPLIYSL) form a helical membrane-spanning segment. The Cytoplasmic segment spans residues 292-313 (RNKDVKVALRKALIKIQRRNIF).

Belongs to the G-protein coupled receptor 1 family.

It localises to the cell membrane. Its function is as follows. Odorant receptor. This Homo sapiens (Human) protein is Olfactory receptor 8B3 (OR8B3).